Consider the following 393-residue polypeptide: Pinosylvin synthase (393 aa).

57-60 (KFKR) contributes to the substrate binding site. C167 is a catalytic residue. Substrate-binding positions include L270 and 308–310 (GGR).

This sequence belongs to the thiolase-like superfamily. Chalcone/stilbene synthases family. As to quaternary structure, homodimer.

The protein localises to the cytoplasm. It carries out the reaction (E)-cinnamoyl-CoA + 3 malonyl-CoA + 3 H(+) = (E)-pinosylvin + 4 CO2 + 4 CoA. It catalyses the reaction 3-phenylpropanoyl-CoA + 3 malonyl-CoA + 3 H(+) = dihydropinosylvin + 4 CO2 + 4 CoA. It participates in phytoalexin biosynthesis; hydropinosylvin biosynthesis. Functionally, catalyzes the production of pinosylvin from cinnamoyl-CoA and malonyl-CoA, and dihydropinosylvin from dihydrocinnamoyl-CoA. The protein is Pinosylvin synthase of Pinus sylvestris (Scotch pine).